A 370-amino-acid chain; its full sequence is MSKIVVALSGGVDSSVTAFILKYQQNHEVIAVFMRNWDSFANNDILGNEDINQDICPQEKDWEDAKKIASQLNIPIYRVDFVKEYYDEVFTYLIEEYRQGRTPNPDIFCNKYIKFGKFIEYVEKNFNPDFIATGHYAKVENSLLYRAKDRNKDQSYFLSQLSSDQLKKIIFPLKDLTKDVIRKIAAENNLVTAQKKDSTGICFIGERNFDKFLQNYIPNMPGNIVDIETNEVVGQHVGVMYYTLGQRKINLSGMKYPYYVAGHDLKNKILYVASIHSKNYLKSDKLEAIEFNLINKNFNKKNLTAKFRYRQEDIKIEILNIDKNKIEISYPDEFEAVTPGQHVVIYDGESCVGGGIINKTYYKGNLNQFH.

ATP is bound by residues A7 to S14 and M34. An interaction with target base in tRNA region spans residues N104–D106. Catalysis depends on C109, which acts as the Nucleophile. The cysteines at positions 109 and 202 are disulfide-linked. Position 134 (G134) interacts with ATP. The interaction with tRNA stretch occupies residues K152–Q154. C202 (cysteine persulfide intermediate) is an active-site residue. Residues R308–Y309 are interaction with tRNA.

It belongs to the MnmA/TRMU family.

It is found in the cytoplasm. It catalyses the reaction S-sulfanyl-L-cysteinyl-[protein] + uridine(34) in tRNA + AH2 + ATP = 2-thiouridine(34) in tRNA + L-cysteinyl-[protein] + A + AMP + diphosphate + H(+). In terms of biological role, catalyzes the 2-thiolation of uridine at the wobble position (U34) of tRNA, leading to the formation of s(2)U34. The sequence is that of tRNA-specific 2-thiouridylase MnmA from Mycoplasma mobile (strain ATCC 43663 / 163K / NCTC 11711) (Mesomycoplasma mobile).